The sequence spans 480 residues: Mannose-1-phosphate guanylyltransferase ManC (480 aa).

Belongs to the mannose-6-phosphate isomerase type 2 family.

The catalysed reaction is alpha-D-mannose 1-phosphate + GTP + H(+) = GDP-alpha-D-mannose + diphosphate. It participates in nucleotide-sugar biosynthesis; GDP-alpha-D-mannose biosynthesis; GDP-alpha-D-mannose from alpha-D-mannose 1-phosphate (GTP route): step 1/1. Functionally, involved in the biosynthesis of the capsular polysaccharide colanic acid. This chain is Mannose-1-phosphate guanylyltransferase ManC (manC), found in Salmonella typhimurium (strain LT2 / SGSC1412 / ATCC 700720).